The following is a 208-amino-acid chain: Large ribosomal subunit protein uL4 (208 aa).

The disordered stretch occupies residues 45–85 (RQGTHKAKTRAQVRGGGRKPYRQKGTGNARQGSTRSPLMIG). Positions 46 to 66 (QGTHKAKTRAQVRGGGRKPYR) are enriched in basic residues. Residues 69–80 (GTGNARQGSTRS) are compositionally biased toward polar residues.

Belongs to the universal ribosomal protein uL4 family. In terms of assembly, part of the 50S ribosomal subunit.

One of the primary rRNA binding proteins, this protein initially binds near the 5'-end of the 23S rRNA. It is important during the early stages of 50S assembly. It makes multiple contacts with different domains of the 23S rRNA in the assembled 50S subunit and ribosome. Functionally, forms part of the polypeptide exit tunnel. This is Large ribosomal subunit protein uL4 from Chlorobium phaeobacteroides (strain DSM 266 / SMG 266 / 2430).